The chain runs to 267 residues: 2-oxoglutarate synthase subunit KorB (267 aa).

In terms of assembly, heterotetramer of the KorA, KorB, KorC and KorD subunits.

It carries out the reaction 2 oxidized [2Fe-2S]-[ferredoxin] + 2-oxoglutarate + CoA = succinyl-CoA + 2 reduced [2Fe-2S]-[ferredoxin] + CO2 + H(+). The protein is 2-oxoglutarate synthase subunit KorB (korB) of Archaeoglobus fulgidus (strain ATCC 49558 / DSM 4304 / JCM 9628 / NBRC 100126 / VC-16).